Consider the following 226-residue polypeptide: uncharacterized protein (226 aa).

The helical transmembrane segment at 203 to 225 (FGISDIYTSTLSFGLIISLFYLL) threads the bilayer.

The protein resides in the membrane. This is an uncharacterized protein from Acanthamoeba polyphaga (Amoeba).